Consider the following 343-residue polypeptide: Heat-inducible transcription repressor HrcA (343 aa).

Belongs to the HrcA family.

Negative regulator of class I heat shock genes (grpE-dnaK-dnaJ and groELS operons). Prevents heat-shock induction of these operons. The chain is Heat-inducible transcription repressor HrcA from Clostridium botulinum (strain Eklund 17B / Type B).